The primary structure comprises 277 residues: Thymidylate synthase (277 aa).

Arginine 27 is a binding site for dUMP. A (6R)-5,10-methylene-5,6,7,8-tetrahydrofolate-binding site is contributed by histidine 57. Arginine 132 to arginine 133 provides a ligand contact to dUMP. The active-site Nucleophile is the cysteine 152. Residues arginine 179 to aspartate 182, asparagine 190, and histidine 220 to tyrosine 222 each bind dUMP. Aspartate 182 contributes to the (6R)-5,10-methylene-5,6,7,8-tetrahydrofolate binding site. Residue alanine 276 coordinates (6R)-5,10-methylene-5,6,7,8-tetrahydrofolate.

It belongs to the thymidylate synthase family. Bacterial-type ThyA subfamily. As to quaternary structure, homodimer.

It localises to the cytoplasm. The enzyme catalyses dUMP + (6R)-5,10-methylene-5,6,7,8-tetrahydrofolate = 7,8-dihydrofolate + dTMP. Its pathway is pyrimidine metabolism; dTTP biosynthesis. Its function is as follows. Catalyzes the reductive methylation of 2'-deoxyuridine-5'-monophosphate (dUMP) to 2'-deoxythymidine-5'-monophosphate (dTMP) while utilizing 5,10-methylenetetrahydrofolate (mTHF) as the methyl donor and reductant in the reaction, yielding dihydrofolate (DHF) as a by-product. This enzymatic reaction provides an intracellular de novo source of dTMP, an essential precursor for DNA biosynthesis. This Acidovorax sp. (strain JS42) protein is Thymidylate synthase.